The sequence spans 356 residues: MEYRRVKDQESYDVVSQKDIESPGERSLSSTSATSSLSTAGASKGKNSWKLKSIVTLALTLLTSSQAILIVWSKRAGKYEYSVTTANFSVEALKCLLSLIALYRTWNSQGVTEDNRLSTSFDEVSVYPIPAILYMVKNLLQYYIFAYVDAPAYQILKNLNIISTGVLYRIILKKKLSEIQWAAFILLCAGCTTAQLNPSSDHVLQTPIQGWVMAIVMALLSGFAGVYTEAIIKKRPSRNINVQNFWLYIFGMLFNLVAICVQDFDAVMNKGFFHGYSFITVLMILNHALSGIAVSMVMKYADNIVKVYSTSVAMLLTAVVSVFLFGFHLSLAFFLGSTVVSVSVYLHSVGKPQPQK.

Over residues 1–24 the composition is skewed to basic and acidic residues; that stretch reads MEYRRVKDQESYDVVSQKDIESPG. Positions 1–44 are disordered; sequence MEYRRVKDQESYDVVSQKDIESPGERSLSSTSATSSLSTAGASK. Residues 1–52 are Cytoplasmic-facing; it reads MEYRRVKDQESYDVVSQKDIESPGERSLSSTSATSSLSTAGASKGKNSWKLK. The segment covering 27 to 44 has biased composition (low complexity); it reads SLSSTSATSSLSTAGASK. A helical membrane pass occupies residues 53–73; the sequence is SIVTLALTLLTSSQAILIVWS. Topologically, residues 74–82 are lumenal; that stretch reads KRAGKYEYS. A helical membrane pass occupies residues 83–103; it reads VTTANFSVEALKCLLSLIALY. Topologically, residues 104-125 are cytoplasmic; the sequence is RTWNSQGVTEDNRLSTSFDEVS. A helical membrane pass occupies residues 126–146; the sequence is VYPIPAILYMVKNLLQYYIFA. The Lumenal segment spans residues 147 to 149; sequence YVD. The helical transmembrane segment at 150-172 threads the bilayer; the sequence is APAYQILKNLNIISTGVLYRIIL. Residues 173-175 lie on the Cytoplasmic side of the membrane; the sequence is KKK. Residues 176–196 traverse the membrane as a helical segment; it reads LSEIQWAAFILLCAGCTTAQL. The Lumenal segment spans residues 197-211; it reads NPSSDHVLQTPIQGW. Residues 212–232 form a helical membrane-spanning segment; sequence VMAIVMALLSGFAGVYTEAII. The Cytoplasmic portion of the chain corresponds to 233–239; sequence KKRPSRN. Residues 240 to 260 form a helical membrane-spanning segment; the sequence is INVQNFWLYIFGMLFNLVAIC. Topologically, residues 261–277 are lumenal; sequence VQDFDAVMNKGFFHGYS. A helical transmembrane segment spans residues 278–298; sequence FITVLMILNHALSGIAVSMVM. Over 299–314 the chain is Cytoplasmic; sequence KYADNIVKVYSTSVAM. Residues 315-335 traverse the membrane as a helical segment; that stretch reads LLTAVVSVFLFGFHLSLAFFL. Over 336–356 the chain is Lumenal; the sequence is GSTVVSVSVYLHSVGKPQPQK.

The protein belongs to the nucleotide-sugar transporter family. CMP-Sialate:CMP antiporter (TC 2.A.7.12) subfamily. Expressed in roots, leaves and stalks.

The protein localises to the golgi apparatus membrane. Sugar transporter involved in the transport of CMP-sialic acid from the cytoplasm into the Golgi. May transport important nucleotide sugars such as CMP-Kdo (2-keto-3-deoxy-D-manno-octulosonic acid) in physiological conditions. The chain is CMP-sialic acid transporter 2 from Oryza sativa subsp. japonica (Rice).